The primary structure comprises 639 residues: Homeobox protein 9 (639 aa).

6 disordered regions span residues 1–45 (MLNS…DKQN), 66–144 (SPNH…DDNS), 157–179 (NQNQ…QNQN), 262–313 (PRTL…SSGT), 331–422 (SESS…QTSN), and 436–547 (TNKN…NNEN). Positions 72-109 (ANNNNNNNNNNNNNNNNNNNNNNNNNNNNNNNNNNNIQ) form a coiled coil. Low complexity-rich tracts occupy residues 73 to 119 (NNNN…SNNN) and 126 to 142 (GSLN…GNDD). Coiled coils occupy residues 152–184 (SNQN…KDSW) and 230–296 (EIEI…NINE). Over residues 266–300 (NNSSDSISENINNNNNNNNNNNNNNNNNINESNIN) the composition is skewed to low complexity. Over residues 345–354 (QPRKVPRDLN) the composition is skewed to basic and acidic residues. Over residues 358 to 399 (NNNINYANNNNNNNNNNNNNNHNNNINNNNNNNNNNNNNSNN) the composition is skewed to low complexity. Positions 365–396 (NNNNNNNNNNNNNNHNNNINNNNNNNNNNNNN) form a coiled coil. Over residues 405 to 422 (GSITNSVNIKPSKDQTSN) the composition is skewed to polar residues. The span at 436–526 (TNKNNNNNNN…NNNLTSSSNN (91 aa)) shows a compositional bias: low complexity. Residues 532–547 (GNTSPNQSSANGNNEN) are compositionally biased toward polar residues. Residues 559–621 (KRKKRGKLPG…NARRRILPRQ (63 aa)) constitute a DNA-binding region (homeobox).

Its subcellular location is the nucleus. In terms of biological role, putative transcription factor. The protein is Homeobox protein 9 (hbx9) of Dictyostelium discoideum (Social amoeba).